Reading from the N-terminus, the 405-residue chain is Cysteine desulfurase IscS (405 aa).

Pyridoxal 5'-phosphate-binding positions include 75-76 (AT), Asn156, Gln184, and 204-206 (SAH). Residue Lys207 is modified to N6-(pyridoxal phosphate)lysine. Thr244 is a binding site for pyridoxal 5'-phosphate. Catalysis depends on Cys329, which acts as the Cysteine persulfide intermediate. [2Fe-2S] cluster is bound at residue Cys329.

This sequence belongs to the class-V pyridoxal-phosphate-dependent aminotransferase family. NifS/IscS subfamily. Homodimer. Forms a heterotetramer with IscU, interacts with other sulfur acceptors. It depends on pyridoxal 5'-phosphate as a cofactor.

It localises to the cytoplasm. It catalyses the reaction (sulfur carrier)-H + L-cysteine = (sulfur carrier)-SH + L-alanine. It participates in cofactor biosynthesis; iron-sulfur cluster biosynthesis. Functionally, master enzyme that delivers sulfur to a number of partners involved in Fe-S cluster assembly, tRNA modification or cofactor biosynthesis. Catalyzes the removal of elemental sulfur atoms from cysteine to produce alanine. Functions as a sulfur delivery protein for Fe-S cluster synthesis onto IscU, an Fe-S scaffold assembly protein, as well as other S acceptor proteins. This chain is Cysteine desulfurase IscS, found in Acinetobacter baumannii (strain SDF).